Here is a 263-residue protein sequence, read N- to C-terminus: 3-deoxy-manno-octulosonate cytidylyltransferase (263 aa).

This sequence belongs to the KdsB family.

It is found in the cytoplasm. It carries out the reaction 3-deoxy-alpha-D-manno-oct-2-ulosonate + CTP = CMP-3-deoxy-beta-D-manno-octulosonate + diphosphate. It participates in nucleotide-sugar biosynthesis; CMP-3-deoxy-D-manno-octulosonate biosynthesis; CMP-3-deoxy-D-manno-octulosonate from 3-deoxy-D-manno-octulosonate and CTP: step 1/1. The protein operates within bacterial outer membrane biogenesis; lipopolysaccharide biosynthesis. Its function is as follows. Activates KDO (a required 8-carbon sugar) for incorporation into bacterial lipopolysaccharide in Gram-negative bacteria. The polypeptide is 3-deoxy-manno-octulosonate cytidylyltransferase (Burkholderia thailandensis (strain ATCC 700388 / DSM 13276 / CCUG 48851 / CIP 106301 / E264)).